Here is a 578-residue protein sequence, read N- to C-terminus: Proline--tRNA ligase (578 aa).

It belongs to the class-II aminoacyl-tRNA synthetase family. ProS type 1 subfamily. As to quaternary structure, homodimer.

The protein resides in the cytoplasm. It catalyses the reaction tRNA(Pro) + L-proline + ATP = L-prolyl-tRNA(Pro) + AMP + diphosphate. Catalyzes the attachment of proline to tRNA(Pro) in a two-step reaction: proline is first activated by ATP to form Pro-AMP and then transferred to the acceptor end of tRNA(Pro). As ProRS can inadvertently accommodate and process non-cognate amino acids such as alanine and cysteine, to avoid such errors it has two additional distinct editing activities against alanine. One activity is designated as 'pretransfer' editing and involves the tRNA(Pro)-independent hydrolysis of activated Ala-AMP. The other activity is designated 'posttransfer' editing and involves deacylation of mischarged Ala-tRNA(Pro). The misacylated Cys-tRNA(Pro) is not edited by ProRS. The polypeptide is Proline--tRNA ligase (Burkholderia ambifaria (strain MC40-6)).